The primary structure comprises 483 residues: V-type proton ATPase subunit H (483 aa).

Residues Ser59 and Ser483 each carry the phosphoserine modification.

This sequence belongs to the V-ATPase H subunit family. As to quaternary structure, V-ATPase is a heteromultimeric enzyme made up of two complexes: the ATP-hydrolytic V1 complex and the proton translocation V0 complex. The V1 complex consists of three catalytic AB heterodimers that form a heterohexamer, three peripheral stalks each consisting of EG heterodimers, one central rotor including subunits D and F, and the regulatory subunits C and H. The proton translocation complex V0 consists of the proton transport subunit a, a ring of proteolipid subunits c9c'', rotary subunit d, subunits e and f, and the accessory subunits ATP6AP1/Ac45 and ATP6AP2/PRR. Interacts with AP2M1.

The protein resides in the cytoplasmic vesicle. The protein localises to the clathrin-coated vesicle membrane. Its function is as follows. Subunit of the V1 complex of vacuolar(H+)-ATPase (V-ATPase), a multisubunit enzyme composed of a peripheral complex (V1) that hydrolyzes ATP and a membrane integral complex (V0) that translocates protons. V-ATPase is responsible for acidifying and maintaining the pH of intracellular compartments and in some cell types, is targeted to the plasma membrane, where it is responsible for acidifying the extracellular environment. Subunit H is essential for V-ATPase activity, but not for the assembly of the complex. Involved in the endocytosis mediated by clathrin-coated pits, required for the formation of endosomes. The protein is V-type proton ATPase subunit H (Atp6v1h) of Mus musculus (Mouse).